The chain runs to 343 residues: Methionine import ATP-binding protein MetN (343 aa).

One can recognise an ABC transporter domain in the interval 2–241; sequence IKLFHINKIF…PKTPIAQAFI (240 aa). 38–45 contributes to the ATP binding site; the sequence is GSSGAGKS.

The protein belongs to the ABC transporter superfamily. Methionine importer (TC 3.A.1.24) family. The complex is composed of two ATP-binding proteins (MetN), two transmembrane proteins (MetI) and a solute-binding protein (MetQ).

Its subcellular location is the cell inner membrane. It carries out the reaction L-methionine(out) + ATP + H2O = L-methionine(in) + ADP + phosphate + H(+). It catalyses the reaction D-methionine(out) + ATP + H2O = D-methionine(in) + ADP + phosphate + H(+). Part of the ABC transporter complex MetNIQ involved in methionine import. Responsible for energy coupling to the transport system. This chain is Methionine import ATP-binding protein MetN, found in Photorhabdus laumondii subsp. laumondii (strain DSM 15139 / CIP 105565 / TT01) (Photorhabdus luminescens subsp. laumondii).